The chain runs to 279 residues: Undecaprenyl-diphosphatase (279 aa).

The next 8 helical transmembrane spans lie at 1–21, 39–59, 96–116, 128–148, 155–175, 201–221, 231–251, and 259–279; these read MVLEAVLLGIVQGITEFLPIS, GRFFLSSVQLGTSFALILYFF, LLLVTGTIPVVLLGFLLVRFV, FTMGVALIVFGLLLGFADALF, IFQITFIESVLIGAAQVFAII, FSFLLSLPVTFIGGMYGLVAG, YSLIGAIVSFVVGLLVVSALL, and FVLFVYYRVLFGLFLVIVSFF.

Belongs to the UppP family.

The protein localises to the cell membrane. It carries out the reaction di-trans,octa-cis-undecaprenyl diphosphate + H2O = di-trans,octa-cis-undecaprenyl phosphate + phosphate + H(+). In terms of biological role, catalyzes the dephosphorylation of undecaprenyl diphosphate (UPP). Confers resistance to bacitracin. This Tropheryma whipplei (strain Twist) (Whipple's bacillus) protein is Undecaprenyl-diphosphatase.